A 1520-amino-acid chain; its full sequence is Putative lipoprotein AcfD homolog (1520 aa).

The first 23 residues, 1 to 23 (MNKKFKYKKSLLAAILSATLLAG), serve as a signal peptide directing secretion. 2 disordered regions span residues 22–107 (AGCD…GATC) and 226–247 (NAAT…TTPG). Cys-24 carries N-palmitoyl cysteine lipidation. The S-diacylglycerol cysteine moiety is linked to residue Cys-24. Residues 31-42 (SSSDTPPVDSGT) show a composition bias toward low complexity. Positions 51–77 (DPTPNPEPTPEPTPDPEPTPEPIPDPE) are enriched in pro residues. Residues 97-107 (GGSQRVTGATC) show a composition bias toward polar residues. Low complexity predominate over residues 234 to 247 (STHTSPVVPVTTPG). The Peptidase M60 domain maps to 1081 to 1381 (GNMQSTGLWA…MYAQLKEWAE (301 aa)). Residues 1498–1520 (DLPKPEQGPETINQVTEHKMSAE) form a disordered region.

It to V.cholerae AcfD (VC_0845).

Its subcellular location is the cell inner membrane. Involved in a type II secretion system (T2SS, formerly general secretion pathway, GSP) for the export of folded proteins across the outer membrane. This chain is Putative lipoprotein AcfD homolog (yghJ), found in Escherichia coli (strain K12).